A 101-amino-acid polypeptide reads, in one-letter code: Interleukin-8 (101 aa).

The first 22 residues, 1–22 (MTSKLAVALLAAFVLSAALCEA), serve as a signal peptide directing secretion. Arg-27 carries the post-translational modification Citrulline. 2 cysteine pairs are disulfide-bonded: Cys-34–Cys-61 and Cys-36–Cys-77.

Belongs to the intercrine alpha (chemokine CxC) family. Homodimer. Interacts with TNFAIP6 (via Link domain); this interaction interferes with chemokine binding to glycosaminoglycans. Post-translationally, citrullination at Arg-27 prevents proteolysis, and dampens tissue inflammation, it also enhances leukocytosis, possibly through impaired chemokine clearance from the blood circulation.

Its subcellular location is the secreted. In terms of biological role, chemotactic factor that mediates inflammatory response by attracting neutrophils, basophils, and T-cells to clear pathogens and protect the host from infection. Also plays an important role in neutrophil activation. Released in response to an inflammatory stimulus, exerts its effect by binding to the G-protein-coupled receptors CXCR1 and CXCR2, primarily found in neutrophils, monocytes and endothelial cells. G-protein heterotrimer (alpha, beta, gamma subunits) constitutively binds to CXCR1/CXCR2 receptor and activation by IL8 leads to beta and gamma subunits release from Galpha (GNAI2 in neutrophils) and activation of several downstream signaling pathways including PI3K and MAPK pathways. This chain is Interleukin-8 (CXCL8), found in Canis lupus familiaris (Dog).